We begin with the raw amino-acid sequence, 721 residues long: Polyribonucleotide nucleotidyltransferase (721 aa).

Residues aspartate 495 and aspartate 501 each contribute to the Mg(2+) site. Residues 562–621 form the KH domain; sequence PRITTIKIRPERIKDIIGPGGKTIKDITARTGTSINIEDDGSVSIASPNQDKVEEAIKMI. The S1 motif domain occupies 631-699; the sequence is GRIYMGTVRK…RSGKIRLSRK (69 aa). Residues 699–721 form a disordered region; sequence KEALADSAKKSEGTEPPKGEPAK.

It belongs to the polyribonucleotide nucleotidyltransferase family. Mg(2+) is required as a cofactor.

The protein resides in the cytoplasm. It catalyses the reaction RNA(n+1) + phosphate = RNA(n) + a ribonucleoside 5'-diphosphate. Functionally, involved in mRNA degradation. Catalyzes the phosphorolysis of single-stranded polyribonucleotides processively in the 3'- to 5'-direction. The protein is Polyribonucleotide nucleotidyltransferase of Anaeromyxobacter dehalogenans (strain 2CP-C).